The sequence spans 110 residues: MAVSGLSGIESMLQQMRAVVQAAQSNGVSPAELAPQPASFAAELQRSLQRVSAAQIAATNQGKAYELGAPGVSLNDVMIDLQKSSIAFQTAVQVRNRLVAAYKEISAMSV.

This sequence belongs to the FliE family.

The protein resides in the bacterial flagellum basal body. This Bordetella petrii (strain ATCC BAA-461 / DSM 12804 / CCUG 43448) protein is Flagellar hook-basal body complex protein FliE.